The chain runs to 140 residues: Nucleoside diphosphate kinase (140 aa).

The ATP site is built by K11, F59, R87, T93, R104, and N114. The active-site Pros-phosphohistidine intermediate is the H117.

This sequence belongs to the NDK family. As to quaternary structure, homotetramer. Mg(2+) serves as cofactor.

It is found in the cytoplasm. It catalyses the reaction a 2'-deoxyribonucleoside 5'-diphosphate + ATP = a 2'-deoxyribonucleoside 5'-triphosphate + ADP. The enzyme catalyses a ribonucleoside 5'-diphosphate + ATP = a ribonucleoside 5'-triphosphate + ADP. In terms of biological role, major role in the synthesis of nucleoside triphosphates other than ATP. The ATP gamma phosphate is transferred to the NDP beta phosphate via a ping-pong mechanism, using a phosphorylated active-site intermediate. The polypeptide is Nucleoside diphosphate kinase (Rickettsia typhi (strain ATCC VR-144 / Wilmington)).